The chain runs to 349 residues: tRNA pseudouridine synthase D (349 aa).

Phe26 is a binding site for substrate. Asp79 functions as the Nucleophile in the catalytic mechanism. Asn128 lines the substrate pocket. Residues 154–302 enclose the TRUD domain; it reads GVPNYFGSQR…VEGSRRAVLL (149 aa). Phe328 is a binding site for substrate.

This sequence belongs to the pseudouridine synthase TruD family.

The enzyme catalyses uridine(13) in tRNA = pseudouridine(13) in tRNA. Its function is as follows. Responsible for synthesis of pseudouridine from uracil-13 in transfer RNAs. This Yersinia pestis bv. Antiqua (strain Antiqua) protein is tRNA pseudouridine synthase D.